Reading from the N-terminus, the 533-residue chain is MGSLNTEDVLEHSSAFGATNPLDPEEFRRQGHMIIDFLADYYRDVEKYPVRSQVEPGYLRKRLPETAPYNPESIETILQDVTSEIIPGLTHWQSPNYYAYFPSSGSVAGFLGEMLSTGFNVVGFNWMSSPAATELEGIVMDWFGKMLNLPKSYLFSGTGGGVLQGTTCEAILCTLTAARDRKLNKIGREHIGRLVVYGSDQTHCALQKAAQIAGINPKNFRAVKTFKANSFGLAASTLREVILEDIEAGLIPLFVCPTVGTTSSTAVDPIGPICEVAKEYEMWVHIDAAYAGSACICPEFRHFIDGVEEADSFSLNAHKWFFTTLDCCCLWVKDPSSLVKALSTNPEYLRNKATESRQVVDYKDWQIALIRRFRSMKLWMVLRSYGVTNLRNFLRSHVRMAKTFEGLVGADRRFEITVPRTFAMVCFRLLPPTTVKVCGENGVHQNGNGVIAVLRNENEELVLANKLNQVYLRQVKATGSVYMTHAVVGGVYMIRFAVGSTLTEERHVIHAWEVLQEHADLILSKFDEANFSS.

Lysine 319 bears the N6-(pyridoxal phosphate)lysine mark.

It belongs to the group II decarboxylase family. As to quaternary structure, homodimer. Pyridoxal 5'-phosphate serves as cofactor. In terms of tissue distribution, roots.

It catalyses the reaction L-tyrosine + H(+) = tyramine + CO2. It carries out the reaction L-dopa + H(+) = dopamine + CO2. The enzyme catalyses 5-hydroxy-L-tryptophan + H(+) = serotonin + CO2. Its function is as follows. Marginally higher substrate specificity for L-DOPA over L-tyrosine. The sequence is that of Tyrosine/DOPA decarboxylase 3 (TYDC3) from Papaver somniferum (Opium poppy).